A 76-amino-acid chain; its full sequence is Exodeoxyribonuclease 7 small subunit (76 aa).

The protein belongs to the XseB family. As to quaternary structure, heterooligomer composed of large and small subunits.

It is found in the cytoplasm. It carries out the reaction Exonucleolytic cleavage in either 5'- to 3'- or 3'- to 5'-direction to yield nucleoside 5'-phosphates.. Bidirectionally degrades single-stranded DNA into large acid-insoluble oligonucleotides, which are then degraded further into small acid-soluble oligonucleotides. The polypeptide is Exodeoxyribonuclease 7 small subunit (Geobacter sulfurreducens (strain ATCC 51573 / DSM 12127 / PCA)).